A 217-amino-acid chain; its full sequence is MLO-like protein (217 aa).

Helical transmembrane passes span Phe35 to Ser55, Gly59 to Thr79, and Leu119 to Ile139.

The protein belongs to the MLO family.

It localises to the membrane. May be involved in modulation of pathogen defense and leaf cell death. The sequence is that of MLO-like protein from Linum usitatissimum (Flax).